A 213-amino-acid polypeptide reads, in one-letter code: UPF0301 protein Aave_0907 (213 aa).

The tract at residues 93 to 120 is disordered; sequence MGPSSGKQAAGEGGAQAEGEGAEESAYA.

It belongs to the UPF0301 (AlgH) family.

The chain is UPF0301 protein Aave_0907 from Paracidovorax citrulli (strain AAC00-1) (Acidovorax citrulli).